The following is a 362-amino-acid chain: [LysW]-lysine hydrolase (362 aa).

Residue His69 coordinates Zn(2+). The active site involves Asp71. Asp94 lines the Zn(2+) pocket. Glu127 functions as the Proton acceptor in the catalytic mechanism. Residues Glu128, Glu151, and His334 each contribute to the Zn(2+) site.

The protein belongs to the peptidase M20A family. LysK subfamily. The cofactor is Zn(2+). Co(2+) is required as a cofactor.

The protein localises to the cytoplasm. It catalyses the reaction [amino-group carrier protein]-C-terminal-gamma-(L-lysyl)-L-glutamate + H2O = [amino-group carrier protein]-C-terminal-L-glutamate + L-lysine. The protein operates within amino-acid biosynthesis; L-lysine biosynthesis via AAA pathway; L-lysine from L-alpha-aminoadipate (Thermus route): step 5/5. Its function is as follows. Catalyzes the release of L-lysine from [LysW]-gamma-L-lysine. This chain is [LysW]-lysine hydrolase, found in Deinococcus radiodurans (strain ATCC 13939 / DSM 20539 / JCM 16871 / CCUG 27074 / LMG 4051 / NBRC 15346 / NCIMB 9279 / VKM B-1422 / R1).